Reading from the N-terminus, the 400-residue chain is Ribose-phosphate pyrophosphokinase 2, chloroplastic (400 aa).

The transit peptide at 1–44 (MASLALTSPPSVKIPSYLSSSSSSLFSRSSISFRTTESRSRICV) directs the protein to the chloroplast. Asp-214, His-216, Asp-225, and Asp-229 together coordinate Mg(2+). The segment at 300-315 (GKVAVMVDDIIDTAGT) is binding of phosphoribosylpyrophosphate.

This sequence belongs to the ribose-phosphate pyrophosphokinase family.

The protein localises to the plastid. Its subcellular location is the chloroplast. It carries out the reaction D-ribose 5-phosphate + ATP = 5-phospho-alpha-D-ribose 1-diphosphate + AMP + H(+). The chain is Ribose-phosphate pyrophosphokinase 2, chloroplastic (PRS2) from Arabidopsis thaliana (Mouse-ear cress).